Consider the following 173-residue polypeptide: Large ribosomal subunit protein uL10 (173 aa).

Belongs to the universal ribosomal protein uL10 family. In terms of assembly, part of the ribosomal stalk of the 50S ribosomal subunit. The N-terminus interacts with L11 and the large rRNA to form the base of the stalk. The C-terminus forms an elongated spine to which L12 dimers bind in a sequential fashion forming a multimeric L10(L12)X complex.

In terms of biological role, forms part of the ribosomal stalk, playing a central role in the interaction of the ribosome with GTP-bound translation factors. The protein is Large ribosomal subunit protein uL10 (rplJ) of Synechocystis sp. (strain ATCC 27184 / PCC 6803 / Kazusa).